We begin with the raw amino-acid sequence, 218 residues long: 3-dehydroquinate dehydratase (218 aa).

Residues 29 to 31 (EFR) and arginine 56 each bind 3-dehydroquinate. Histidine 116 acts as the Proton donor/acceptor in catalysis. The Schiff-base intermediate with substrate role is filled by lysine 142. 3-dehydroquinate-binding residues include arginine 180, serine 200, and glutamine 204.

This sequence belongs to the type-I 3-dehydroquinase family. Homodimer.

The catalysed reaction is 3-dehydroquinate = 3-dehydroshikimate + H2O. It functions in the pathway metabolic intermediate biosynthesis; chorismate biosynthesis; chorismate from D-erythrose 4-phosphate and phosphoenolpyruvate: step 3/7. Involved in the third step of the chorismate pathway, which leads to the biosynthesis of aromatic amino acids. Catalyzes the cis-dehydration of 3-dehydroquinate (DHQ) and introduces the first double bond of the aromatic ring to yield 3-dehydroshikimate. In Methanococcus maripaludis (strain C6 / ATCC BAA-1332), this protein is 3-dehydroquinate dehydratase.